A 370-amino-acid chain; its full sequence is Queuine tRNA-ribosyltransferase (370 aa).

Catalysis depends on D93, which acts as the Proton acceptor. Residues 93 to 97 (DSGGF), D147, Q189, and G216 contribute to the substrate site. Residues 247–253 (GVGSPDC) form an RNA binding region. D266 functions as the Nucleophile in the catalytic mechanism. The RNA binding; important for wobble base 34 recognition stretch occupies residues 271-275 (TRIAR). Zn(2+) contacts are provided by C304, C306, C309, and H335.

The protein belongs to the queuine tRNA-ribosyltransferase family. In terms of assembly, homodimer. Within each dimer, one monomer is responsible for RNA recognition and catalysis, while the other monomer binds to the replacement base PreQ1. It depends on Zn(2+) as a cofactor.

The catalysed reaction is 7-aminomethyl-7-carbaguanine + guanosine(34) in tRNA = 7-aminomethyl-7-carbaguanosine(34) in tRNA + guanine. It participates in tRNA modification; tRNA-queuosine biosynthesis. Functionally, catalyzes the base-exchange of a guanine (G) residue with the queuine precursor 7-aminomethyl-7-deazaguanine (PreQ1) at position 34 (anticodon wobble position) in tRNAs with GU(N) anticodons (tRNA-Asp, -Asn, -His and -Tyr). Catalysis occurs through a double-displacement mechanism. The nucleophile active site attacks the C1' of nucleotide 34 to detach the guanine base from the RNA, forming a covalent enzyme-RNA intermediate. The proton acceptor active site deprotonates the incoming PreQ1, allowing a nucleophilic attack on the C1' of the ribose to form the product. After dissociation, two additional enzymatic reactions on the tRNA convert PreQ1 to queuine (Q), resulting in the hypermodified nucleoside queuosine (7-(((4,5-cis-dihydroxy-2-cyclopenten-1-yl)amino)methyl)-7-deazaguanosine). In Pelotomaculum thermopropionicum (strain DSM 13744 / JCM 10971 / SI), this protein is Queuine tRNA-ribosyltransferase.